The chain runs to 443 residues: ATP-dependent protease ATPase subunit HslU (443 aa).

ATP-binding positions include Val-18, 60–65 (GVGKTE), Asp-256, Glu-321, and Arg-393.

Belongs to the ClpX chaperone family. HslU subfamily. In terms of assembly, a double ring-shaped homohexamer of HslV is capped on each side by a ring-shaped HslU homohexamer. The assembly of the HslU/HslV complex is dependent on binding of ATP.

The protein resides in the cytoplasm. In terms of biological role, ATPase subunit of a proteasome-like degradation complex; this subunit has chaperone activity. The binding of ATP and its subsequent hydrolysis by HslU are essential for unfolding of protein substrates subsequently hydrolyzed by HslV. HslU recognizes the N-terminal part of its protein substrates and unfolds these before they are guided to HslV for hydrolysis. The sequence is that of ATP-dependent protease ATPase subunit HslU from Azoarcus sp. (strain BH72).